Here is a 711-residue protein sequence, read N- to C-terminus: DNA topoisomerase 3 (711 aa).

The 134-residue stretch at 2-135 folds into the Toprim domain; that stretch reads KSLILAEKPS…IRRLWISSVT (134 aa). Positions 8 and 104 each coordinate Mg(2+). The region spanning 152 to 580 is the Topo IA-type catalytic domain; sequence YNDLYYAALA…EMKDFTKDVV (429 aa). Residues 186–191 form an interaction with DNA region; it reads SLGRVQ. The active-site O-(5'-phospho-DNA)-tyrosine intermediate is the tyrosine 305. The tract at residues 691–711 is disordered; that stretch reads MNKNEGLDNNPFKDALKNLNL.

This sequence belongs to the type IA topoisomerase family. The cofactor is Mg(2+).

The enzyme catalyses ATP-independent breakage of single-stranded DNA, followed by passage and rejoining.. In terms of biological role, releases the supercoiling and torsional tension of DNA, which is introduced during the DNA replication and transcription, by transiently cleaving and rejoining one strand of the DNA duplex. Introduces a single-strand break via transesterification at a target site in duplex DNA. The scissile phosphodiester is attacked by the catalytic tyrosine of the enzyme, resulting in the formation of a DNA-(5'-phosphotyrosyl)-enzyme intermediate and the expulsion of a 3'-OH DNA strand. The free DNA strand then undergoes passage around the unbroken strand, thus removing DNA supercoils. Finally, in the religation step, the DNA 3'-OH attacks the covalent intermediate to expel the active-site tyrosine and restore the DNA phosphodiester backbone. The chain is DNA topoisomerase 3 from Staphylococcus aureus (strain Mu50 / ATCC 700699).